The chain runs to 672 residues: Hydrogenase-4 component B (672 aa).

The Periplasmic portion of the chain corresponds to 1 to 5 (MDALQ). A helical membrane pass occupies residues 6–26 (LLTWSLILYLFASLASLFLLG). The Cytoplasmic segment spans residues 27 to 30 (LDRL). The chain crosses the membrane as a helical span at residues 31-51 (AIKLSGITSLVGGVIGIISGI). At 52-79 (TQLHAGVTLVARFAPPFEFADLTLRMDS) the chain is on the periplasmic side. A helical transmembrane segment spans residues 80–100 (LSAFMVLVISLLVVVCSLYSL). Residues 101–119 (TYMREYEGKGAAAMGFFMN) are Cytoplasmic-facing. Residues 120–140 (IFIASMVALLVMDNAFWFIVL) form a helical membrane-spanning segment. At 141–164 (FEMMSLSSWFLVIARQDKTSINAG) the chain is on the periplasmic side. Residues 165-185 (MLYFFIAHAGSVLIMIAFLLM) form a helical membrane-spanning segment. Over 186 to 199 (GRESGSLDFASFRT) the chain is Cytoplasmic. Residues 200–220 (LSLSPGLASAVFLLAFFGFGA) form a helical membrane-spanning segment. Topologically, residues 221–242 (KAGMMPLHSWLPRAHPAAPSHA) are periplasmic. The helical transmembrane segment at 243–263 (SALMSGVMVKIGIFGILKVAM) threads the bilayer. The Cytoplasmic portion of the chain corresponds to 264-272 (DLLAQTGLP). Residues 273-293 (LWWGILVMAIGAISALLGVLY) traverse the membrane as a helical segment. Residues 294 to 311 (ALAEQDIKRLLAWSTVEN) lie on the Periplasmic side of the membrane. The chain crosses the membrane as a helical span at residues 312–332 (VGIILLAVGVAMVGLSLHDPL). At 333–342 (LTVVGLLGAL) the chain is on the cytoplasmic side. Residues 343–363 (FHLLNHALFKGLLFLGAGAII) form a helical membrane-spanning segment. Over 364 to 384 (SRLHTHDMEKMGALAKRMPWT) the chain is Periplasmic. Residues 385-405 (AAACLIGCLAISAIPPLNGFI) traverse the membrane as a helical segment. Topologically, residues 406–427 (SEWYTWQSLFSLSRVEAVALQL) are cytoplasmic. A helical membrane pass occupies residues 428–448 (AGPIAMVMLAVTGGLAVMCFV). Over 449 to 474 (KMYGITFCGAPRSTHAEEAQEVPNTM) the chain is Periplasmic. Residues 475 to 495 (IVAMLLLAALCVLIALSASWL) form a helical membrane-spanning segment. The Cytoplasmic segment spans residues 496–504 (APKIMHIAH). A helical membrane pass occupies residues 505-525 (AFTNTPPATVASGIALVPGTF). Residues 526 to 531 (HTQVTP) are Periplasmic-facing. Residues 532–552 (SLLLLLLLAMPLLPGLYWLWC) form a helical membrane-spanning segment. Over 553-651 (RSRRAAFRRT…KEIQHLQSGD (99 aa)) the chain is Cytoplasmic. Residues 652-672 (FRLYCLYVVAALVVLLIAIAV) form a helical membrane-spanning segment.

It belongs to the complex I subunit 5 family.

It localises to the cell inner membrane. Possible component of hydrogenase 4. The chain is Hydrogenase-4 component B from Escherichia coli (strain K12).